Reading from the N-terminus, the 424-residue chain is Probable threonylcarbamoyladenosine tRNA methylthiotransferase (424 aa).

An MTTase N-terminal domain is found at 1–106; it reads MRVAIETYGC…VVDAVYSALN (106 aa). Positions 10, 44, 73, 143, 147, and 150 each coordinate [4Fe-4S] cluster. The Radical SAM core domain occupies 129 to 359; it reads LRENAIAIVS…TDLMRKIGLE (231 aa). The 59-residue stretch at 362 to 420 folds into the TRAM domain; sequence KRFVGKKLRVLVTKEGKNGRNLARMNSYRAVVTEGAVGEFVEVKIKDCRFNYLIGQLAA.

It belongs to the methylthiotransferase family. CDKAL1 subfamily. Requires [4Fe-4S] cluster as cofactor.

It catalyses the reaction N(6)-L-threonylcarbamoyladenosine(37) in tRNA + (sulfur carrier)-SH + AH2 + 2 S-adenosyl-L-methionine = 2-methylsulfanyl-N(6)-L-threonylcarbamoyladenosine(37) in tRNA + (sulfur carrier)-H + 5'-deoxyadenosine + L-methionine + A + S-adenosyl-L-homocysteine + 2 H(+). Catalyzes the methylthiolation of N6-threonylcarbamoyladenosine (t(6)A), leading to the formation of 2-methylthio-N6-threonylcarbamoyladenosine (ms(2)t(6)A) at position 37 in tRNAs that read codons beginning with adenine. This is Probable threonylcarbamoyladenosine tRNA methylthiotransferase from Archaeoglobus fulgidus (strain ATCC 49558 / DSM 4304 / JCM 9628 / NBRC 100126 / VC-16).